Reading from the N-terminus, the 274-residue chain is Ribosomal RNA small subunit methyltransferase A (274 aa).

Positions 26, 28, 53, 74, 94, and 114 each coordinate S-adenosyl-L-methionine.

It belongs to the class I-like SAM-binding methyltransferase superfamily. rRNA adenine N(6)-methyltransferase family. RsmA subfamily.

The protein localises to the cytoplasm. The catalysed reaction is adenosine(1518)/adenosine(1519) in 16S rRNA + 4 S-adenosyl-L-methionine = N(6)-dimethyladenosine(1518)/N(6)-dimethyladenosine(1519) in 16S rRNA + 4 S-adenosyl-L-homocysteine + 4 H(+). Its function is as follows. Specifically dimethylates two adjacent adenosines (A1518 and A1519) in the loop of a conserved hairpin near the 3'-end of 16S rRNA in the 30S particle. May play a critical role in biogenesis of 30S subunits. This Bdellovibrio bacteriovorus (strain ATCC 15356 / DSM 50701 / NCIMB 9529 / HD100) protein is Ribosomal RNA small subunit methyltransferase A.